The following is a 320-amino-acid chain: GTP 3',8-cyclase (320 aa).

The region spanning 5-222 is the Radical SAM core domain; the sequence is KLSRPLKVLR…LMKKEFTFYP (218 aa). Arg-14 lines the GTP pocket. 3 residues coordinate [4Fe-4S] cluster: Cys-21, Cys-25, and Cys-28. Arg-65 serves as a coordination point for GTP. Gly-69 contributes to the S-adenosyl-L-methionine binding site. Thr-96 serves as a coordination point for GTP. Ser-120 lines the S-adenosyl-L-methionine pocket. Lys-157 is a GTP binding site. Met-191 provides a ligand contact to S-adenosyl-L-methionine. Cys-253 and Cys-256 together coordinate [4Fe-4S] cluster. Residue 258–260 coordinates GTP; the sequence is RIR. Residue Cys-270 participates in [4Fe-4S] cluster binding.

The protein belongs to the radical SAM superfamily. MoaA family. In terms of assembly, monomer and homodimer. The cofactor is [4Fe-4S] cluster.

It carries out the reaction GTP + AH2 + S-adenosyl-L-methionine = (8S)-3',8-cyclo-7,8-dihydroguanosine 5'-triphosphate + 5'-deoxyadenosine + L-methionine + A + H(+). Its pathway is cofactor biosynthesis; molybdopterin biosynthesis. Functionally, catalyzes the cyclization of GTP to (8S)-3',8-cyclo-7,8-dihydroguanosine 5'-triphosphate. This Aquifex aeolicus (strain VF5) protein is GTP 3',8-cyclase.